Reading from the N-terminus, the 91-residue chain is Alpha-defensin-related sequence 2 (91 aa).

An N-terminal signal peptide occupies residues 1–19; that stretch reads MKKLVLLFALVLLAFQVQA. Residues 20–58 constitute a propeptide that is removed on maturation; the sequence is DSIQNTDEETKTEEQPGEKDQAVSVSFGDPQGSALQDAA. A disordered region spans residues 22-48; it reads IQNTDEETKTEEQPGEKDQAVSVSFGD. A compositionally biased stretch (basic and acidic residues) spans 27-40; sequence EETKTEEQPGEKDQ. 7 tandem repeats follow at residues 65 to 67, 68 to 70, 71 to 73, 74 to 76, 77 to 79, 80 to 82, and 83 to 85. Residues 65-85 form a 7 X 3 AA tandem repeats of C-P-X region; it reads CPQCPRCPSCPSCPRCPRCPR.

This sequence belongs to the alpha-defensin family. Small bowel, spleen, colon, kidney, liver, stomach and femur marrow.

It localises to the secreted. Apparent precursor of a secreted, cationic, proline- and cysteine-rich peptide that contains Cys-Pro-Xaa repeats. Unlike cryptdin, the proposed mature peptide region lacks the structural motif characteristic of defensins. It may have microbicidal activities. This Mus musculus (Mouse) protein is Alpha-defensin-related sequence 2 (Defa-rs2).